The primary structure comprises 404 residues: DNA replication and repair protein RecF (404 aa).

Residue 30–37 coordinates ATP; that stretch reads GSNGQGKT.

It belongs to the RecF family.

It localises to the cytoplasm. Functionally, the RecF protein is involved in DNA metabolism; it is required for DNA replication and normal SOS inducibility. RecF binds preferentially to single-stranded, linear DNA. It also seems to bind ATP. The chain is DNA replication and repair protein RecF from Clavibacter michiganensis subsp. michiganensis (strain NCPPB 382).